A 92-amino-acid polypeptide reads, in one-letter code: Secreted RxLR effector protein 21 (92 aa).

An N-terminal signal peptide occupies residues methionine 1 to alanine 21. Positions arginine 30–arginine 33 match the RxLR motif.

The protein belongs to the RxLR effector family.

Its subcellular location is the secreted. It is found in the host nucleus. The protein resides in the host cytoplasm. Secreted effector that completely suppresses the host cell death induced by cell death-inducing proteins. The sequence is that of Secreted RxLR effector protein 21 from Plasmopara viticola (Downy mildew of grapevine).